The sequence spans 78 residues: DNA-directed RNA polymerase subunit Rpo5 (78 aa).

This sequence belongs to the archaeal Rpo5/eukaryotic RPB5 RNA polymerase subunit family. Part of the RNA polymerase complex.

It localises to the cytoplasm. The catalysed reaction is RNA(n) + a ribonucleoside 5'-triphosphate = RNA(n+1) + diphosphate. Functionally, DNA-dependent RNA polymerase (RNAP) catalyzes the transcription of DNA into RNA using the four ribonucleoside triphosphates as substrates. The protein is DNA-directed RNA polymerase subunit Rpo5 of Methanothrix thermoacetophila (strain DSM 6194 / JCM 14653 / NBRC 101360 / PT) (Methanosaeta thermophila).